Consider the following 192-residue polypeptide: Leucine-rich repeat-containing protein 51 (192 aa).

LRR repeat units follow at residues 49-71 (SLTQ…NQVV), 80-101 (NLAW…LTTF), and 103-124 (NLSV…NKLA). An LRRCT domain is found at 137–175 (NPIEEEKGYRQYVLCNLPRITTFDFSGVTRADRSTAEVW).

As to expression, widely expressed in adult and embryonic tissues. Expressed in the developing choroid plexus from 12.5 dpc and in the epithelium of the developing airway tract from 14.5 dpc. Also expressed in the postnatal inner ear.

Its subcellular location is the cytoplasm. The protein is Leucine-rich repeat-containing protein 51 of Mus musculus (Mouse).